Here is a 418-residue protein sequence, read N- to C-terminus: Serine hydroxymethyltransferase (418 aa).

Residues L121 and 125–127 each bind (6S)-5,6,7,8-tetrahydrofolate; that span reads GHL. An N6-(pyridoxal phosphate)lysine modification is found at K230. (6S)-5,6,7,8-tetrahydrofolate is bound at residue 355–357; that stretch reads SPF.

This sequence belongs to the SHMT family. As to quaternary structure, homodimer. Pyridoxal 5'-phosphate is required as a cofactor.

The protein resides in the cytoplasm. The enzyme catalyses (6R)-5,10-methylene-5,6,7,8-tetrahydrofolate + glycine + H2O = (6S)-5,6,7,8-tetrahydrofolate + L-serine. Its pathway is one-carbon metabolism; tetrahydrofolate interconversion. It participates in amino-acid biosynthesis; glycine biosynthesis; glycine from L-serine: step 1/1. Functionally, catalyzes the reversible interconversion of serine and glycine with tetrahydrofolate (THF) serving as the one-carbon carrier. This reaction serves as the major source of one-carbon groups required for the biosynthesis of purines, thymidylate, methionine, and other important biomolecules. Also exhibits THF-independent aldolase activity toward beta-hydroxyamino acids, producing glycine and aldehydes, via a retro-aldol mechanism. The sequence is that of Serine hydroxymethyltransferase from Streptococcus agalactiae serotype V (strain ATCC BAA-611 / 2603 V/R).